The chain runs to 351 residues: DNA-directed RNA polymerase subunit alpha (351 aa).

The segment at 1–236 (MSVNTKNWQE…DQLTLFVHFE (236 aa)) is alpha N-terminal domain (alpha-NTD). The segment at 256–351 (DDANQLNRYL…AKKLEQELLG (96 aa)) is alpha C-terminal domain (alpha-CTD).

The protein belongs to the RNA polymerase alpha chain family. In terms of assembly, homodimer. The RNAP catalytic core consists of 2 alpha, 1 beta, 1 beta' and 1 omega subunit. When a sigma factor is associated with the core the holoenzyme is formed, which can initiate transcription.

The catalysed reaction is RNA(n) + a ribonucleoside 5'-triphosphate = RNA(n+1) + diphosphate. Its function is as follows. DNA-dependent RNA polymerase catalyzes the transcription of DNA into RNA using the four ribonucleoside triphosphates as substrates. The chain is DNA-directed RNA polymerase subunit alpha from Erythrobacter litoralis (strain HTCC2594).